The chain runs to 400 residues: NADH-quinone oxidoreductase subunit D (400 aa).

This sequence belongs to the complex I 49 kDa subunit family. As to quaternary structure, NDH-1 is composed of 14 different subunits. Subunits NuoB, C, D, E, F, and G constitute the peripheral sector of the complex.

Its subcellular location is the cell inner membrane. The catalysed reaction is a quinone + NADH + 5 H(+)(in) = a quinol + NAD(+) + 4 H(+)(out). NDH-1 shuttles electrons from NADH, via FMN and iron-sulfur (Fe-S) centers, to quinones in the respiratory chain. The immediate electron acceptor for the enzyme in this species is believed to be ubiquinone. Couples the redox reaction to proton translocation (for every two electrons transferred, four hydrogen ions are translocated across the cytoplasmic membrane), and thus conserves the redox energy in a proton gradient. This Granulibacter bethesdensis (strain ATCC BAA-1260 / CGDNIH1) protein is NADH-quinone oxidoreductase subunit D.